The chain runs to 395 residues: Long-chain-alcohol dehydrogenase 1 (395 aa).

NAD(+) contacts are provided by residues 98–102 and 141–144; these read GSALD and TTSG.

It belongs to the iron-containing alcohol dehydrogenase family. Homooctamer.

The enzyme catalyses glycerol + NAD(+) = dihydroxyacetone + NADH + H(+). The catalysed reaction is a long-chain primary fatty alcohol + 2 NAD(+) + H2O = a long-chain fatty acid + 2 NADH + 3 H(+). Long-chain alkyl alcohol dehydrogenase that can oxidize a broad range of alkyl alcohols from ethanol to 1-triacontanol (C2 to C30) as well as 1,3-propanediol and acetaldehyde. The best substrate is ethanol. Also oxidizes glycerol. This chain is Long-chain-alcohol dehydrogenase 1 (adh1), found in Geobacillus thermodenitrificans (strain NG80-2).